We begin with the raw amino-acid sequence, 148 residues long: Receptor activity-modifying protein 1 (148 aa).

An N-terminal signal peptide occupies residues 1–26; sequence MAPGLRGLPRRGLWLLLAHHLFMVTA. 3 disulfide bridges follow: cysteine 27–cysteine 82, cysteine 40–cysteine 72, and cysteine 57–cysteine 104. Topologically, residues 27–118 are extracellular; it reads CRDPDYGTLI…RALRDPPNSI (92 aa). The chain crosses the membrane as a helical span at residues 119–140; that stretch reads LCPFIVLPITVTLLMTALVVWR. At 141 to 148 the chain is on the cytoplasmic side; sequence SKRTEGIV.

It belongs to the RAMP family. As to quaternary structure, heterodimer of CALCRL and RAMP1; the interaction induces allosteric modulation of CALCRL function and CGRP1/CALCA and CGRP2/CALCB ligand specificity. Heterodimer of CALCR and RAMP1; interaction forms the AMYR1 receptor complex for amylin/IAPP and CGRP1/CALCA ligands.

Its subcellular location is the cell membrane. In terms of biological role, accessory protein that interacts with and modulates the function of G-protein coupled receptors including calcitonin gene-related peptide type 1 receptor (CALCRL) and calcitonin receptor (CALCR). Required for the transport of CALCRL to the plasma membrane. Together with CALCRL, form the receptor complex for the calcitonin gene-related peptides CGRP1/CALCA and CGRP2/CALCB. Together with CALCR, form the AMYR1 receptor complex for amylin/IAPP and CGRP1/CALCA. The chain is Receptor activity-modifying protein 1 from Rattus norvegicus (Rat).